Reading from the N-terminus, the 535-residue chain is T-complex protein 1 subunit beta (535 aa).

A2 is modified (N-acetylalanine). At S3 the chain carries Phosphoserine. Residue K13 is modified to N6-acetyllysine. G44 serves as a coordination point for ADP. Residue G44 coordinates ATP. S60 bears the Phosphoserine mark. D97 provides a ligand contact to Mg(2+). ADP is bound by residues G98, T99, T100, and S101. ATP-binding residues include G98, T99, and T100. K154 is modified (N6-acetyllysine). Residues S168 and S169 each contribute to the ADP site. K181 carries the post-translational modification N6-acetyllysine. A Glycyl lysine isopeptide (Lys-Gly) (interchain with G-Cter in SUMO2) cross-link involves residue K248. The residue at position 260 (S260) is a Phosphoserine. T261 is subject to Phosphothreonine. ADP-binding residues include G410, E495, and K500. Residues E495 and K500 each coordinate ATP.

The protein belongs to the TCP-1 chaperonin family. In terms of assembly, component of the chaperonin-containing T-complex (TRiC), a hexadecamer composed of two identical back-to-back stacked rings enclosing a protein folding chamber. Each ring is made up of eight different subunits: TCP1/CCT1, CCT2, CCT3, CCT4, CCT5, CCT6A/CCT6, CCT7, CCT8. Interacts with PACRG. Interacts with FLCN. Interacts with DLEC1. Interacts with SVEP1.

It is found in the cytoplasm. The enzyme catalyses ATP + H2O = ADP + phosphate + H(+). In terms of biological role, component of the chaperonin-containing T-complex (TRiC), a molecular chaperone complex that assists the folding of actin, tubulin and other proteins upon ATP hydrolysis. The TRiC complex mediates the folding of WRAP53/TCAB1, thereby regulating telomere maintenance. As part of the TRiC complex may play a role in the assembly of BBSome, a complex involved in ciliogenesis regulating transports vesicles to the cilia. The protein is T-complex protein 1 subunit beta (CCT2) of Bos taurus (Bovine).